Consider the following 143-residue polypeptide: Deoxyuridine 5'-triphosphate nucleotidohydrolase (143 aa).

Substrate contacts are provided by residues 63 to 65 (RSG), Asn-76, 80 to 82 (TID), and Lys-90.

Belongs to the dUTPase family. Mg(2+) serves as cofactor.

The catalysed reaction is dUTP + H2O = dUMP + diphosphate + H(+). It functions in the pathway pyrimidine metabolism; dUMP biosynthesis; dUMP from dCTP (dUTP route): step 2/2. Functionally, this enzyme is involved in nucleotide metabolism: it produces dUMP, the immediate precursor of thymidine nucleotides and it decreases the intracellular concentration of dUTP so that uracil cannot be incorporated into DNA. The protein is Deoxyuridine 5'-triphosphate nucleotidohydrolase of Finegoldia magna (strain ATCC 29328 / DSM 20472 / WAL 2508) (Peptostreptococcus magnus).